A 343-amino-acid polypeptide reads, in one-letter code: Heat-inducible transcription repressor HrcA (343 aa).

The protein belongs to the HrcA family.

In terms of biological role, negative regulator of class I heat shock genes (grpE-dnaK-dnaJ and groELS operons). Prevents heat-shock induction of these operons. This is Heat-inducible transcription repressor HrcA from Bacillus subtilis (strain 168).